A 225-amino-acid chain; its full sequence is Cytidylate kinase (225 aa).

Gly10–Thr18 is an ATP binding site.

The protein belongs to the cytidylate kinase family. Type 1 subfamily.

It is found in the cytoplasm. It catalyses the reaction CMP + ATP = CDP + ADP. The enzyme catalyses dCMP + ATP = dCDP + ADP. This is Cytidylate kinase from Streptococcus suis (strain 98HAH33).